The following is a 189-amino-acid chain: MKQSSPTYLKHHFLIAMPHMADPNFAQTVTYLVEHNEQGAMGLVINRPSGLNLAEVLEQLKPDALPPARCQHIDIYNGGPVQTDRGFVLHPSGLSYQSTLELGELAMSTSQDVLFAIAAGTGPEKSLISLGYAGWEAGQLEAELSDNAWLTCPADPAILFDLPPEERLSAAAARLGVNLSLLTAQAGHA.

It belongs to the UPF0301 (AlgH) family.

The chain is UPF0301 protein PLES_04031 from Pseudomonas aeruginosa (strain LESB58).